Here is a 316-residue protein sequence, read N- to C-terminus: N-acetylmuramic acid 6-phosphate etherase (316 aa).

The SIS domain maps to 68–231 (ITDRLRSGGR…STCAMVRLGK (164 aa)). The Proton donor role is filled by Glu-96. The active site involves Glu-127.

Belongs to the GCKR-like family. MurNAc-6-P etherase subfamily. In terms of assembly, homodimer.

It carries out the reaction N-acetyl-D-muramate 6-phosphate + H2O = N-acetyl-D-glucosamine 6-phosphate + (R)-lactate. It functions in the pathway amino-sugar metabolism; N-acetylmuramate degradation. Specifically catalyzes the cleavage of the D-lactyl ether substituent of MurNAc 6-phosphate, producing GlcNAc 6-phosphate and D-lactate. In Prochlorococcus marinus (strain MIT 9303), this protein is N-acetylmuramic acid 6-phosphate etherase.